A 205-amino-acid polypeptide reads, in one-letter code: Small ribosomal subunit protein uS4 (205 aa).

The interval 20–46 (WGRSKSPVNRREYGPGQHGQRRKGKLS) is disordered. Residues 94–157 (RRLDAVVYRA…RQLTLVLEAS (64 aa)) enclose the S4 RNA-binding domain.

It belongs to the universal ribosomal protein uS4 family. As to quaternary structure, part of the 30S ribosomal subunit. Contacts protein S5. The interaction surface between S4 and S5 is involved in control of translational fidelity.

One of the primary rRNA binding proteins, it binds directly to 16S rRNA where it nucleates assembly of the body of the 30S subunit. Its function is as follows. With S5 and S12 plays an important role in translational accuracy. This is Small ribosomal subunit protein uS4 from Beijerinckia indica subsp. indica (strain ATCC 9039 / DSM 1715 / NCIMB 8712).